A 136-amino-acid chain; its full sequence is Protein LpdD (136 aa).

This sequence belongs to the CinA family.

Its function is as follows. Probably involved in tannin degradation, however the precise biochemical function in metabolism of gallate is unknown. This chain is Protein LpdD, found in Lactiplantibacillus plantarum (strain ATCC BAA-793 / NCIMB 8826 / WCFS1) (Lactobacillus plantarum).